Consider the following 342-residue polypeptide: Transmembrane protein 268 (342 aa).

The tract at residues 1–30 (MACEPQVDPGATGPLPPSSPGWSALPGGSP) is disordered. A run of 2 helical transmembrane segments spans residues 105-125 (AFAVVFYVVVWANIYSTSQMF) and 132-152 (AGMLLVTLAAVSLTLTLVLVF).

Interacts with ITGAM; this interaction inhibits ITGAM degradation via the endosome-lysosome pathway. Interacts with ITGB4; this interaction prevents ITGB4 degradation.

It localises to the cell membrane. Its function is as follows. Stabilizes cell surface expression of ITGAM and participates in the adhesion and migration of phagocytes during bacterial clearance. The protein is Transmembrane protein 268 of Homo sapiens (Human).